The chain runs to 157 residues: Putative gamma-glutamylcyclotransferase CG2811 (157 aa).

14-17 (YGTL) contributes to the substrate binding site. The Proton acceptor role is filled by E89.

Belongs to the gamma-glutamylcyclotransferase family.

In terms of biological role, putative gamma-glutamylcyclotransferase. The polypeptide is Putative gamma-glutamylcyclotransferase CG2811 (Drosophila melanogaster (Fruit fly)).